A 396-amino-acid polypeptide reads, in one-letter code: Protein-export membrane protein SecD (396 aa).

6 helical membrane-spanning segments follow: residues 12-32 (ILIL…KGLD), 243-263 (LKGT…IVSI), 272-292 (IPIL…ASLI), 298-318 (LPSI…QIVI), 338-358 (FFII…LFVL), and 360-380 (VGML…GIFI).

The protein belongs to the SecD/SecF family. SecD subfamily. Part of the protein translocation apparatus. Forms a complex with SecF.

The protein localises to the cell membrane. Involved in protein export. The polypeptide is Protein-export membrane protein SecD (Methanocaldococcus jannaschii (strain ATCC 43067 / DSM 2661 / JAL-1 / JCM 10045 / NBRC 100440) (Methanococcus jannaschii)).